A 117-amino-acid polypeptide reads, in one-letter code: UPF0342 protein lwe2240 (117 aa).

Belongs to the UPF0342 family.

The sequence is that of UPF0342 protein lwe2240 from Listeria welshimeri serovar 6b (strain ATCC 35897 / DSM 20650 / CCUG 15529 / CIP 8149 / NCTC 11857 / SLCC 5334 / V8).